Consider the following 235-residue polypeptide: Aspartate/glutamate leucyltransferase (235 aa).

The protein belongs to the R-transferase family. Bpt subfamily.

Its subcellular location is the cytoplasm. The enzyme catalyses N-terminal L-glutamyl-[protein] + L-leucyl-tRNA(Leu) = N-terminal L-leucyl-L-glutamyl-[protein] + tRNA(Leu) + H(+). It carries out the reaction N-terminal L-aspartyl-[protein] + L-leucyl-tRNA(Leu) = N-terminal L-leucyl-L-aspartyl-[protein] + tRNA(Leu) + H(+). In terms of biological role, functions in the N-end rule pathway of protein degradation where it conjugates Leu from its aminoacyl-tRNA to the N-termini of proteins containing an N-terminal aspartate or glutamate. In Pseudomonas syringae pv. syringae (strain B728a), this protein is Aspartate/glutamate leucyltransferase.